The primary structure comprises 420 residues: Glucose-1-phosphate adenylyltransferase (420 aa).

Alpha-D-glucose 1-phosphate-binding positions include Tyr107, Gly172, 187 to 188, and Ser205; that span reads EK.

This sequence belongs to the bacterial/plant glucose-1-phosphate adenylyltransferase family. As to quaternary structure, homotetramer.

It catalyses the reaction alpha-D-glucose 1-phosphate + ATP + H(+) = ADP-alpha-D-glucose + diphosphate. It participates in glycan biosynthesis; glycogen biosynthesis. Its function is as follows. Involved in the biosynthesis of ADP-glucose, a building block required for the elongation reactions to produce glycogen. Catalyzes the reaction between ATP and alpha-D-glucose 1-phosphate (G1P) to produce pyrophosphate and ADP-Glc. This Agrobacterium fabrum (strain C58 / ATCC 33970) (Agrobacterium tumefaciens (strain C58)) protein is Glucose-1-phosphate adenylyltransferase.